We begin with the raw amino-acid sequence, 268 residues long: UPF0328 protein ECU09_2030 (268 aa).

It belongs to the UPF0328 family.

In Encephalitozoon cuniculi (strain GB-M1) (Microsporidian parasite), this protein is UPF0328 protein ECU09_2030.